The following is a 326-amino-acid chain: Cyclin-dependent kinase B2-1 (326 aa).

One can recognise a Protein kinase domain in the interval 28–318 (YEKLEKVGEG…AKKAMEHPYF (291 aa)). ATP is bound by residues 34–42 (VGEGTYGKV) and lysine 57. The residue at position 38 (threonine 38) is a Phosphothreonine. Tyrosine 39 bears the Phosphotyrosine mark. The active-site Proton acceptor is the aspartate 159. At threonine 193 the chain carries Phosphothreonine.

It belongs to the protein kinase superfamily. CMGC Ser/Thr protein kinase family. CDC2/CDKX subfamily. In terms of assembly, interacts with CYCB2-1 and CYCB2-2. Binding to CYCB2-1 or CYCB2-2 activates CDK kinase. In terms of tissue distribution, expressed in the dividing region of the root apex and the intercalary meristem of internodes.

Its subcellular location is the nucleus. It localises to the cytoplasm. It is found in the cytoskeleton. The protein resides in the spindle. The protein localises to the phragmoplast. It catalyses the reaction L-seryl-[protein] + ATP = O-phospho-L-seryl-[protein] + ADP + H(+). The enzyme catalyses L-threonyl-[protein] + ATP = O-phospho-L-threonyl-[protein] + ADP + H(+). The catalysed reaction is [DNA-directed RNA polymerase] + ATP = phospho-[DNA-directed RNA polymerase] + ADP + H(+). Its function is as follows. Forms a complex with CYCB2-1 or CYCB2-2 that activates CDK kinase in tobacco BY2 cells during G2/M (mitosis) phases. May be involved in the regulation of the cell cycle at the G2/M transition. The chain is Cyclin-dependent kinase B2-1 (CDKB2-1) from Oryza sativa subsp. japonica (Rice).